The chain runs to 91 residues: LYR motif-containing protein 4 (91 aa).

Pantetheine 4'-phosphate contacts are provided by R6 and K44. K47 bears the N6-succinyllysine mark.

Belongs to the complex I LYR family. As to quaternary structure, homodimer. Component of the mitochondrial core iron-sulfur cluster (ISC) complex composed of NFS1, LYRM4, NDUFAB1, ISCU, FXN, and FDX2; this complex is a heterohexamer containing two copies of each monomer. Component of the cyteine desulfurase complex composed of NFS1, LYRM4 and NDUFAB1; this complex contributes to the stability and cysteine desulfurase activity of NFS1. Interacts with FXN; this interaction is nickel-dependent. Interacts with the cytoplasmic form of NFS1; the complex increases the stability of NFS1. Forms a complex with the cytoplasmic form of NFS1; this complex increases the stability and cysteine desulfurase activity of NFS1. Interacts with NFS1.

It localises to the mitochondrion. It is found in the nucleus. It participates in cofactor biosynthesis; iron-sulfur cluster biosynthesis. Its function is as follows. Stabilizing factor, of the core iron-sulfur cluster (ISC) assembly complex, that regulates, in association with NDUFAB1, the stability and the cysteine desulfurase activity of NFS1 and participates in the [2Fe-2S] clusters assembly on the scaffolding protein ISCU. The core iron-sulfur cluster (ISC) assembly complex is involved in the de novo synthesis of a [2Fe-2S] cluster, the first step of the mitochondrial iron-sulfur protein biogenesis. This process is initiated by the cysteine desulfurase complex (NFS1:LYRM4:NDUFAB1) that produces persulfide which is delivered on the scaffold protein ISCU in a FXN-dependent manner. Then this complex is stabilized by FDX2 which provides reducing equivalents to accomplish the [2Fe-2S] cluster assembly. Finally, the [2Fe-2S] cluster is transferred from ISCU to chaperone proteins, including HSCB, HSPA9 and GLRX5. May also participates in the iron-sulfur protein biogenesis in the cytoplasm through its interaction with the cytoplasmic form of NFS1. This chain is LYR motif-containing protein 4, found in Bos taurus (Bovine).